Consider the following 72-residue polypeptide: Probable protein transport protein Sec61 subunit gamma (72 aa).

Over 1 to 40 (MSQKLQKPSFLSEYLRSIRLFSKKCVRPSGKELSMSIKRH) the chain is Cytoplasmic. Residues 41 to 61 (AIGIGFLGILGYAIKLIHIPI) form a helical membrane-spanning segment. At 62 to 72 (NNIIVSSPGKE) the chain is on the extracellular side.

This sequence belongs to the SecE/SEC61-gamma family. In terms of assembly, heterotrimeric complex composed of SEC61-alpha, SEC61-beta and SEC61-gamma.

Its subcellular location is the endoplasmic reticulum membrane. In terms of biological role, necessary for protein translocation in the endoplasmic reticulum. This chain is Probable protein transport protein Sec61 subunit gamma, found in Encephalitozoon cuniculi (strain GB-M1) (Microsporidian parasite).